We begin with the raw amino-acid sequence, 36 residues long: Conotoxin Cl14.10 (36 aa).

The propeptide occupies 1–2 (NE).

Post-translationally, contains 2 disulfide bond. In terms of tissue distribution, expressed by the venom duct.

Its subcellular location is the secreted. This chain is Conotoxin Cl14.10, found in Californiconus californicus (California cone).